A 152-amino-acid polypeptide reads, in one-letter code: Endoribonuclease YbeY (152 aa).

Zn(2+)-binding residues include His-113, His-117, and His-123.

This sequence belongs to the endoribonuclease YbeY family. The cofactor is Zn(2+).

The protein resides in the cytoplasm. Single strand-specific metallo-endoribonuclease involved in late-stage 70S ribosome quality control and in maturation of the 3' terminus of the 16S rRNA. The polypeptide is Endoribonuclease YbeY (Pseudoalteromonas atlantica (strain T6c / ATCC BAA-1087)).